We begin with the raw amino-acid sequence, 368 residues long: Germination protease (368 aa).

The propeptide occupies 1 to 16 (MEKKKLDLSQYAVRTD).

It belongs to the peptidase A25 family. Homotetramer. Post-translationally, autoproteolytically processed. The inactive tetrameric zymogen termed p46 autoprocesses to a smaller form termed p41, which is active only during spore germination.

The enzyme catalyses Endopeptidase action with P4 Glu or Asp, P1 preferably Glu &gt; Asp, P1' hydrophobic and P2' Ala.. Functionally, initiates the rapid degradation of small, acid-soluble proteins during spore germination. This Bacillus licheniformis (strain ATCC 14580 / DSM 13 / JCM 2505 / CCUG 7422 / NBRC 12200 / NCIMB 9375 / NCTC 10341 / NRRL NRS-1264 / Gibson 46) protein is Germination protease.